The sequence spans 612 residues: MENQLAKSTEERTFQYQDSLPSLPVPSLEESLKKYLESVKPFANQEEYKKTEEIVQKFQSGIGEKLHQKLLERAKGKRNWLEEWWLNVAYLDVRIPSQLNVNFAGPAAHFEHYWPPKEGTQLERGSITLWHNLNYWQLLRKEKVPVHKVGNTPLDMNQFRMLFSTCKVPGITRDSIMNYFRTESEGRSPNHIVVLCRGRAFVFDVIHEGCLVTPPELLRQLTYIHKKCHSEPDGPGIAALTSEERTRWAKAREYLIGLDPENLALLEKIQSSLLVYSMEDSSPHVTPEDYSEIIAAILIGDPTVRWGDKSYNLISFSNGVFGCNCDHAPFDAMIMVNISYYVDEKIFQNEGRWKGSEKVRDIPLPEELIFIVDEKVLNDINQAKAQYLREASDLQIAAYAFTSFGKKLTKNKMLHPDTFIQLALQLAYYRLHGHPGCCYETAMTRHFYHGRTETMRSCTVEAVRWCQSMQDPSVNLRERQQKMLQAFAKHNKMMKDCSAGKGFDRHLLGLLLIAKEEGLPVPELFTDPLFSKSGGGGNFVLSTSLVGYLRVQGVVVPMVHNGYGFFYHIRDDRFVVACSAWKSCPETDAEKLVQLTFCAFHDMIQLMNSTHL.

The residue at position 1 (Met1) is an N-acetylmethionine. N6-succinyllysine is present on residues Lys40 and Lys57. Residue His327 is the Proton acceptor of the active site. Residues Lys406 and 410-417 (KNKMLHPD) contribute to the CoA site. Lys406 is subject to N6-acetyllysine; alternate. An N6-succinyllysine; alternate modification is found at Lys406. 3 residues coordinate (R)-carnitine: Tyr439, Thr441, and Thr452. The Microbody targeting signal motif lies at 610 to 612 (THL).

The protein belongs to the carnitine/choline acetyltransferase family. As to quaternary structure, monomer.

It is found in the peroxisome. The enzyme catalyses octanoyl-CoA + (R)-carnitine = O-octanoyl-(R)-carnitine + CoA. It carries out the reaction 4,8-dimethylnonanoyl-CoA + (R)-carnitine = O-4,8-dimethylnonanoyl-(R)-carnitine + CoA. It functions in the pathway lipid metabolism; fatty acid beta-oxidation. Functionally, beta-oxidation of fatty acids. The highest activity concerns the C6 to C10 chain length substrate. Converts the end product of pristanic acid beta oxidation, 4,8-dimethylnonanoyl-CoA, to its corresponding carnitine ester. This is Peroxisomal carnitine O-octanoyltransferase (CROT) from Homo sapiens (Human).